The primary structure comprises 296 residues: Phosphatidylglycerol--prolipoprotein diacylglyceryl transferase (296 aa).

Transmembrane regions (helical) follow at residues 10–30, 57–77, 92–112, and 119–139; these read IAFS…LAAF, LLFY…MLFY, VWEG…ACWL, and LHFF…LGFG. Arg-140 provides a ligand contact to a 1,2-diacyl-sn-glycero-3-phospho-(1'-sn-glycerol). Transmembrane regions (helical) follow at residues 194–214, 220–240, and 254–274; these read QLYE…TFSM, YALS…VEFV, and WLTM…ALLA.

It belongs to the Lgt family.

It is found in the cell inner membrane. The enzyme catalyses L-cysteinyl-[prolipoprotein] + a 1,2-diacyl-sn-glycero-3-phospho-(1'-sn-glycerol) = an S-1,2-diacyl-sn-glyceryl-L-cysteinyl-[prolipoprotein] + sn-glycerol 1-phosphate + H(+). It participates in protein modification; lipoprotein biosynthesis (diacylglyceryl transfer). Functionally, catalyzes the transfer of the diacylglyceryl group from phosphatidylglycerol to the sulfhydryl group of the N-terminal cysteine of a prolipoprotein, the first step in the formation of mature lipoproteins. In Xanthomonas oryzae pv. oryzae (strain MAFF 311018), this protein is Phosphatidylglycerol--prolipoprotein diacylglyceryl transferase.